The following is a 408-amino-acid chain: MNVIQNLLSAVSPQPDGDFVDKLNYCATTIGLVLASAFITGWSFVGSPIDCWFPAYYKGWWAEYALDYCYVQNTFFVPFSEDKAERSYNWEQLVADKQNTTSLKQTNQIGYYQWVPFILALQAMLFYFPVVIWRLFYGMAGQNVTSLCNTCTATEGNEESRKGTITTIAGYISQKRHRNLIVKQLSGFQNRANGSAVITSYLFMKALFLINVLFQFVLLKRMLGVDSYFWGAEVTSDLWSGNEWPETGNFPRVTMCEYEVRNLDNIHKHSVQCVLMINMFNEKIFVALWWWLCFLTVVTITNTIYWFWRASGTSVSKNFIRPYVEDIDPKVKNNRGKLQQFVSEFLSPDTVFILRLIELNNGKTPVVELIRDMWRRFNTAVPPPYSAPPLLVKDGAPLLKNFQDESEM.

Residues 29–49 (TIGLVLASAFITGWSFVGSPI) traverse the membrane as a helical segment. A glycan (N-linked (GlcNAc...) asparagine) is linked at Asn-99. The next 3 membrane-spanning stretches (helical) occupy residues 113-133 (QWVPFILALQAMLFYFPVVIW), 197-217 (VITSYLFMKALFLINVLFQFV), and 284-304 (IFVALWWWLCFLTVVTITNTI).

Belongs to the pannexin family.

It is found in the cell membrane. The protein resides in the cell junction. The protein localises to the gap junction. Structural component of the gap junctions. Plays a role in oocyte directional transit in the spermatheca during ovulation by facilitating the directional propagation of the calcium signal in the spermatheca. Plays a role in male tail tip morphogenesis. In Caenorhabditis elegans, this protein is Innexin-12.